A 101-amino-acid polypeptide reads, in one-letter code: NAD(P)H-quinone oxidoreductase subunit 4L, chloroplastic (101 aa).

The next 3 membrane-spanning stretches (helical) occupy residues 2–22 (MLEH…YGLI), 32–52 (MCLE…SDFF), and 61–81 (IFSI…LAIV).

This sequence belongs to the complex I subunit 4L family. As to quaternary structure, NDH is composed of at least 16 different subunits, 5 of which are encoded in the nucleus.

The protein resides in the plastid. It is found in the chloroplast thylakoid membrane. It catalyses the reaction a plastoquinone + NADH + (n+1) H(+)(in) = a plastoquinol + NAD(+) + n H(+)(out). It carries out the reaction a plastoquinone + NADPH + (n+1) H(+)(in) = a plastoquinol + NADP(+) + n H(+)(out). Functionally, NDH shuttles electrons from NAD(P)H:plastoquinone, via FMN and iron-sulfur (Fe-S) centers, to quinones in the photosynthetic chain and possibly in a chloroplast respiratory chain. The immediate electron acceptor for the enzyme in this species is believed to be plastoquinone. Couples the redox reaction to proton translocation, and thus conserves the redox energy in a proton gradient. The polypeptide is NAD(P)H-quinone oxidoreductase subunit 4L, chloroplastic (Daucus carota (Wild carrot)).